The chain runs to 199 residues: Inner membrane-spanning protein YciB (199 aa).

6 helical membrane-spanning segments follow: residues 4–24, 36–56, 64–84, 90–110, 135–155, and 162–182; these read FIDF…PRIV, IFSA…TLFL, GQWI…TFQS, WKAP…HFIG, LAWV…AFTF, and FKVF…GVFL.

Belongs to the YciB family.

It is found in the cell inner membrane. Its function is as follows. Plays a role in cell envelope biogenesis, maintenance of cell envelope integrity and membrane homeostasis. In Azotobacter vinelandii (strain DJ / ATCC BAA-1303), this protein is Inner membrane-spanning protein YciB.